A 609-amino-acid polypeptide reads, in one-letter code: D-apionate lactonase (609 aa).

The enzyme catalyses D-apionolactone + H2O = D-apionate + H(+). It functions in the pathway carbohydrate metabolism. In terms of biological role, involved in catabolism of D-apiose. Hydrolyzes D-apionolactone to D-apionate. This chain is D-apionate lactonase, found in Brucella anthropi (strain ATCC 49188 / DSM 6882 / CCUG 24695 / JCM 21032 / LMG 3331 / NBRC 15819 / NCTC 12168 / Alc 37) (Ochrobactrum anthropi).